A 444-amino-acid polypeptide reads, in one-letter code: Putative zinc metalloprotease XF_1047 (444 aa).

Histidine 22 lines the Zn(2+) pocket. Residue glutamate 23 is part of the active site. Position 26 (histidine 26) interacts with Zn(2+). Residues 98 to 120 traverse the membrane as a helical segment; sequence IAIVAAGPLANLLLCMLLLWVLF. The PDZ domain maps to 192 to 276; that stretch reads TLELSKLKQP…DGHPGMIEIR (85 aa). Transmembrane regions (helical) follow at residues 371–393 and 418–440; these read VGWF…LFPI and AMAA…AFYN.

This sequence belongs to the peptidase M50B family. Zn(2+) serves as cofactor.

The protein localises to the cell inner membrane. The protein is Putative zinc metalloprotease XF_1047 of Xylella fastidiosa (strain 9a5c).